Reading from the N-terminus, the 448-residue chain is Glutamate--tRNA ligase 1 (448 aa).

The short motif at 10 to 20 (PSPTGMLHVGN) is the 'HIGH' region element. A 'KMSKS' region motif is present at residues 240-244 (KISKR). Lysine 243 serves as a coordination point for ATP.

It belongs to the class-I aminoacyl-tRNA synthetase family. Glutamate--tRNA ligase type 1 subfamily. In terms of assembly, monomer.

The protein resides in the cytoplasm. It carries out the reaction tRNA(Glu) + L-glutamate + ATP = L-glutamyl-tRNA(Glu) + AMP + diphosphate. Its function is as follows. Catalyzes the attachment of glutamate to tRNA(Glu) in a two-step reaction: glutamate is first activated by ATP to form Glu-AMP and then transferred to the acceptor end of tRNA(Glu). This Rickettsia typhi (strain ATCC VR-144 / Wilmington) protein is Glutamate--tRNA ligase 1.